We begin with the raw amino-acid sequence, 82 residues long: UPF0437 protein in nifX-nifW intergenic region (82 aa).

This sequence belongs to the UPF0437 family.

This chain is UPF0437 protein in nifX-nifW intergenic region, found in Frankia alni.